A 712-amino-acid polypeptide reads, in one-letter code: Ribosome-releasing factor 2, mitochondrial (712 aa).

The transit peptide at 1–28 (MQYSLLSAQLRCSRFLLRQQAPFINRCY) directs the protein to the mitochondrion. The tr-type G domain maps to 30 to 309 (DDIRNIGILA…AVNAYLPTPN (280 aa)). Residues 39–46 (AHIDAGKT), 103–107 (DTPGH), and 157–160 (NKMD) contribute to the GTP site.

It belongs to the TRAFAC class translation factor GTPase superfamily. Classic translation factor GTPase family. EF-G/EF-2 subfamily.

The protein localises to the mitochondrion. Mitochondrial GTPase that mediates the disassembly of ribosomes from messenger RNA at the termination of mitochondrial protein biosynthesis. Not involved in the GTP-dependent ribosomal translocation step during translation elongation. This is Ribosome-releasing factor 2, mitochondrial from Drosophila virilis (Fruit fly).